A 110-amino-acid chain; its full sequence is Large ribosomal subunit protein uL22 (110 aa).

This sequence belongs to the universal ribosomal protein uL22 family. As to quaternary structure, part of the 50S ribosomal subunit.

In terms of biological role, this protein binds specifically to 23S rRNA; its binding is stimulated by other ribosomal proteins, e.g. L4, L17, and L20. It is important during the early stages of 50S assembly. It makes multiple contacts with different domains of the 23S rRNA in the assembled 50S subunit and ribosome. Its function is as follows. The globular domain of the protein is located near the polypeptide exit tunnel on the outside of the subunit, while an extended beta-hairpin is found that lines the wall of the exit tunnel in the center of the 70S ribosome. The sequence is that of Large ribosomal subunit protein uL22 from Yersinia pseudotuberculosis serotype O:1b (strain IP 31758).